A 3955-amino-acid chain; its full sequence is MERLEAKNQTTKHGERMAPQRYSVLRDEKCLFPVRNDGKLLVDEWRVTELAISSGEKGLKLCRTTCPTAGADPRYLAAAAWALLLWRFAEVDTVQIGLQDIPPGANEDILEAGLKRGMKVLAASRRQVQLLNELWQGDTWSISDADPTCYSYFDTGIVICRGNSQDCLAKCRSPNQLRKANGEACNVLLVLELDLDSNWRKCFLAYKTTVLTDIQATHLKSSFEEVVELARAGRGIPLSEICLVSRRQLDQIGKWNERALVQPKFKAMHQVVHDRATDRRHHPAVIAADRALSYSELETLSLKVAYRLRGSGVQPGDLIPVCFCKSSWAIVAMLAINKLGAAFVPLDPSQPVNRLKSITRQLDATLAVTSPENQSLVEDLVTTTVVVSETTVSELVDVHNEIVLPACDPGAPAYCLFTSGSTGKPKGCVVDHAALASVATHSHALHLGPTSRVLQFASFTFGVSLIEVWCTLAAGGTVCLPSDSDRVSRLADAIRSMGVDWCILTPTVLATLEPEAVPNLRTILVAGEPLKKAQFSLWAERARLFQAYGFTEWAGICCVSPQIRSIGDVGIIGTPANARCWLVEPGNPNQLAPIGAVAELAVEGPSLAQGYLHDPEKTAATLIPPPRWRAQYGHADGKRIYTTGDLVYYDSNGMLRYVSRKDRQVKIRGQRIDLAEPEYHIAQACCTIRNVVLDAIVPADSNGDAILVAFVLPSRDESSSNGGHDSPLFAVPDDHFTSSVRQLTSFLEDKLPDYMVPRLFLQLKETPVTITGKIARQKLREAAEALRHDELVALAGLETRVLPPNTHKETLIHQLVVELLHLPPEMVGMNHNFFSLGGDSVSVMKLVSRAKRVGLSFTVKDVFRSPQLGDLARLTDVVNSGAAQHMPPFSLLDRGAQPGLLSMAAKICQVESSMIQDIYPCTPLQEGMMTLSAAKAGSYIARFVYRLEEHVDSPRFRRAWEMTVEATPILRTRIISASDGRLYQVVIQEKFRWDDDGQPSGECVQNGQDRHMLLGEPLTHAALVRDRNQDGSLSTVFVLTMHHSVCDRWSVGLIMDSVETAYTGQTLTTNSMGPFLQYIQQLQGGDAFWRSQFVGVKAEVFPSLPSPEYTPTPTETIDLSVELRDAVPGGHTIANAIRLAWALVISHYTSCSDVVFGVTISGRAVPVPDIERIIGPIIATVPLRVRLKESSTVLEALKAIQDQSMEMIPFEQLGLRQIRKLSPEAEEACNFQSQLVVQPAWGDENRSLFATCEAGAAAEGGFAAYALSMICQLVGSSQIDVRTEFDPKVIQAPIMQRIVHHFVYTLQYLLAHPDARVAEIPVVSPGEKQLLRQWNGIVPPASHQCVHEIIQQRQIERPTSTAVWAWDGQLTYAELGELSDRLAEYLATKGVQPEVIVPVCLEKSYWTTVAMLGISKAGGAFALLDPSQPEQRLQSICHQLNSAVILTSEKNRDLAGKLASHPIVLSLQSSRRWGHGPAKQAPATARPDHTLYVAFTSGSTGTPKGVVIEHRSFCTSALALNRITGVNSESRMLQFAGYSFDGSIMEMLSALMAGACVCVPSEFQRRNELVAAAAKFELTHAHLTPSVARHLLRGNPEFTKTLVSVGEPMTASDVADWASNGQCKVMNGYGPAECAVSTTIQAAVTSASDPKNIGFPVAGVCWVVHPENHDILLPPGAVGELLIEGPTLARGYLNEPDKTAAAFIPLPAWIKDIRPEQPHGRLYKSGDLVRYNADGSFQYIGRRDSQIKLRGQRIELDEVEKHVYQCWPGVIAVVAVEMVSFTPATQTLVAFVVVEEHVDTTGDILAAPTQEFTGQVAVAQARLREAIPAFMVPEIFIPLLVLPQSASGKTDRRRLRSIATACTREKLAAYGAVGTGTKREPTSVAEREMQAIWAQALNLPLAEIGMDDSFYQLGGDSITAMQVVAHARSKGLAVTMDSILRLKSISKIMSHESSLSPAIVHIDEEEDVWFALSPIQQMFFDRQPSGWDRFSQVFLLRVSQPVTASQLQMALHTLVSKHPMLRARFAKQHDGSWRQVITSKIQESYRCRSHRLNRRSSVDGVVSSGACSLSIQKGPLIAVDLMSREDGAQYLSIVIHHLVVDLVSWRIILADLEAMLRGENPMANHSTPFQTWCRLQAEYARQYLSPQHAFPTDLPDHYHQDPSVFWGLAGQPNLVRDSRRQVFTLDEHTTRQLLGAANAAFATRTDEVLHAVLLYSFLKVFPHRIAPLTFSEGHGREPWDSAIDLSQTVGWFTTMWPVVAELQQNHSFLEVVCRVKDARRAVPCNGWAYFVSRYLNPSGRQAFQQFHPVELVFNYAGEYQQFNQAGAFFIPDMPEYQGSLDAGEQIQRFGIFEVFASVVRGCLQFQFMYNRYMKHQLEIQKWIESCRQTLIEGCSTLIAAKPSRTLSDFPLLPLTYSTLRELLDVTLPTAGVSVENVEDIYPCSPSQRGMLIAQAKAAHNYNASVTWSIRSRIDSRPNVARLKAAWCEVVKRHAILRTVFVESPWPESYMDQVVLQNVSPEFVFCRGSDSLPQSISSPGQTRWSKGQCQHIMRVWERDNGDILCRLDLSHAIMDRTTLAIIQKDLSLAYDERLLPGRAPLYRDYISYIYQQDSESARQYWQGYLEGVEPCEFPTLNPVDPSITKEWGNLYRTLEDRRRLEEFCRTHSVTPWNVAGLAWAMVLRSFTRTDSVCFGYVKSGRDLPIDGIAGTAGPVFNPLPCRVHLTERLTVRETIGRLQEEYLQSLAHQSFPLSDIHRLAGVTSGVLFNTSVAVQTEVASEAEEAKRSLEFTTVAMEDGTEDDMVITLVPRGGELVLHLRHRSRTLTTDQASTVLATFEKALCSILANAEAPMTSIDVFSDHDKAILWSRNRRVPDAVESCVHELIQKHCVERPHSPAVNAWDGAFTYGQLDELSSRLAVYLAAQGVGPNVVVPLCFEKTRWTPIAMMGVMKAGGAFLLLDPSYPLQRLKDICADIDCRLVVSSTTHEAMSRELASTVVVVGEDRHHWQLENTSHTITMPKVRPADALYVVFTSGSTGKPKGVVIEHRSYCSGALDHIRSYNLTPQSRVLQFSSYAFDISIVEQLSVLIAGGCICVISESQRKNSLGEAATALQANHAMLIPSVARLVRHEDLSTITSLSLAGECMQETDVSYWAQHVRLMNGYGPAECSALSLVQPCVLPHSDPHDIGYPVGSVAWVVDPHDHHKLVPNGAVGELLIEGPIVGRGYINNAEKTAEVFIEPPTWLRTLRGHCTSRLYKTGDLVRANPSGSLSILGRKDRQVKLRGQRLELGEVEANVQHCFPGALDVVADLLPSSRGGKPQLVAMVFQNAERAARIAPESDSKLIAEPSVDFMQSATTAETRLRQTVPNFMVPSMFLPLAQIPRTHSDKVDRNSLLKAVAAMSSIELQAYKASVDAGHCSTRAPSTEEEKKLAEIWADVLKVPVEHIGADDNFLLSGGDSIDAMKAAAFCRAAGMALSVADIFAHPVLSDLAKVAVPKSLNGSSTSHQPFSLSPVDSPKDLHMSLMEQGLVPPGSALADLLPGTQAQQFFIERGTFHSYNFSIRGPLDRCRLQKTCTAILSRHSILRTKFLQYEGRLIQIVLDNLETPFTHYTTDGDLLEFCKSLWERDLAALDGLGRLPCKFTLVSRSEQEHVFTIQISHAQWDGVSIPRLFSDIAAIYNQIPLPSTTHFADYVYHRSSRDERPAFDFWKKYLRGSSMPVPFPATNCQDREHKTQWTFQGIKNPRLPAGITMASLVKAACGFHLCQLLSQNDVVFGHTVNGRNLALDNVEALLGCCLNFIPLRVMLQPSWTVLDLLAHVQEQYTRALPHEHLELRDIFRHSTPWPADTQLSFIVQHQNIELHHNIALDGLQVQYSKFAQFDPLTEVWIFSEPHPDRLEIQVCANTRVLSEDQARALCRRLCDLIEFFSASPDCPLSKVVDHMDRPGLLAEEKVLN.

The interval 293-691 (SYSELETLSL…AQACCTIRNV (399 aa)) is adenylation 1. A Carrier 1 domain is found at 806 to 879 (THKETLIHQL…DLARLTDVVN (74 aa)). The residue at position 840 (S840) is an O-(pantetheine 4'-phosphoryl)serine. A condensation 1 region spans residues 916 to 1187 (QDIYPCTPLQ…IATVPLRVRL (272 aa)). Residues 1371–1766 (TYAELGELSD…DEVEKHVYQC (396 aa)) are adenylation 2. The region spanning 1880-1956 (EPTSVAEREM…KIMSHESSLS (77 aa)) is the Carrier 2 domain. S1917 is subject to O-(pantetheine 4'-phosphoryl)serine. An epimerase region spans residues 1970 to 2261 (FALSPIQQMF…FTTMWPVVAE (292 aa)). The interval 2438 to 2724 (EDIYPCSPSQ…FNPLPCRVHL (287 aa)) is condensation 2. The segment at 2906-3299 (TYGQLDELSS…GEVEANVQHC (394 aa)) is adenylation 3. The Carrier 3 domain maps to 3422 to 3498 (APSTEEEKKL…DLAKVAVPKS (77 aa)). At S3459 the chain carries O-(pantetheine 4'-phosphoryl)serine. The condensation 3 stretch occupies residues 3541–3805 (PGTQAQQFFI…CLNFIPLRVM (265 aa)).

This sequence belongs to the NRP synthetase family. As to quaternary structure, interacts with the mitogen-activated protein kinase mpkA.

The protein resides in the cytoplasmic vesicle. Its pathway is alkaloid biosynthesis. In terms of biological role, nonribosomal peptide synthetase; part of the gene cluster that mediates the biosynthesis of the antitumor fumiquinazolines that confer a dual-usage capability to defend against phagocytes in the environment and animal hosts. The simplest member is fumiquinazoline F (FQF) with a 6-6-6 tricyclic core derived from anthranilic acid (Ant), tryptophan (Trp), and alanine (Ala). The trimodular NRPS fmqA is responsible for FQF formation. Modules 1, 2 and 3 of fmqA are predicted to activate and load Ant, Trp and Ala, respectively, providing for the assembly of an Ant-Trp-Ala-S-enzyme intermediate that would undergo double cyclization for chain release and generation of the tricyclic 6-6-6 product fumiquinazoline F. The presence of an E domain predicted for module 2 of fmqA is consistent with epimerization of L-Trp to D-Trp during assembly to generate the R-stereocenter at C14 of FQF. The FAD-dependent monooxygenase fmqB and the monomodular NRPS fmqC then maturate FQF to FQA. FmqB oxidizes the 2',3'-double bond of the indole side chain of FQF, and fmqC activates L-Ala as the adenylate, installs it as the pantetheinyl thioester on its carrier protein domain, and acylates the oxidized indole for subsequent intramolecular cyclization to create the 6-5-5-imidazolindolone of FQA. The FAD-linked oxidoreductase fmqD introduces a third layer of scaffold complexity by converting FQA to the spirohemiaminal FQC, presumably by catalyzing the formation of a transient imine within the pyrazinone ring. FQC subsequently converts nonenzymatically to the known cyclic aminal FQD. The polypeptide is Nonribosomal peptide synthetase fmqA (Aspergillus fumigatus (strain ATCC MYA-4609 / CBS 101355 / FGSC A1100 / Af293) (Neosartorya fumigata)).